Reading from the N-terminus, the 423-residue chain is Serine--tRNA ligase (423 aa).

231-233 is an L-serine binding site; the sequence is TGE. Residue 262–264 coordinates ATP; it reads RQE. E285 is an L-serine binding site. Residue 349–352 participates in ATP binding; the sequence is EISS. S385 lines the L-serine pocket.

The protein belongs to the class-II aminoacyl-tRNA synthetase family. Type-1 seryl-tRNA synthetase subfamily. In terms of assembly, homodimer. The tRNA molecule binds across the dimer.

Its subcellular location is the cytoplasm. The catalysed reaction is tRNA(Ser) + L-serine + ATP = L-seryl-tRNA(Ser) + AMP + diphosphate + H(+). It catalyses the reaction tRNA(Sec) + L-serine + ATP = L-seryl-tRNA(Sec) + AMP + diphosphate + H(+). It functions in the pathway aminoacyl-tRNA biosynthesis; selenocysteinyl-tRNA(Sec) biosynthesis; L-seryl-tRNA(Sec) from L-serine and tRNA(Sec): step 1/1. In terms of biological role, catalyzes the attachment of serine to tRNA(Ser). Is also able to aminoacylate tRNA(Sec) with serine, to form the misacylated tRNA L-seryl-tRNA(Sec), which will be further converted into selenocysteinyl-tRNA(Sec). The protein is Serine--tRNA ligase of Phytoplasma mali (strain AT).